Reading from the N-terminus, the 241-residue chain is Small ribosomal subunit protein uS3 (241 aa).

Positions 39 to 107 (IREILHKELK…DVVINIVEIR (69 aa)) constitute a KH type-2 domain. Positions 217–241 (KRMAEGETGGGGDRGGRQRRDNAAV) are disordered. Residues 230 to 241 (RGGRQRRDNAAV) are compositionally biased toward basic and acidic residues.

The protein belongs to the universal ribosomal protein uS3 family. In terms of assembly, part of the 30S ribosomal subunit. Forms a tight complex with proteins S10 and S14.

In terms of biological role, binds the lower part of the 30S subunit head. Binds mRNA in the 70S ribosome, positioning it for translation. This Bradyrhizobium diazoefficiens (strain JCM 10833 / BCRC 13528 / IAM 13628 / NBRC 14792 / USDA 110) protein is Small ribosomal subunit protein uS3.